Reading from the N-terminus, the 372-residue chain is Protein-glutamate methylesterase/protein-glutamine glutaminase 1 (372 aa).

Residues 4–121 (KVLVVDDSSF…ATNKDDAILL (118 aa)) form the Response regulatory domain. D55 bears the 4-aspartylphosphate mark. Residues 138–174 (VVRPTTPTPPPRSSASSVLGGVSTHTQPAPVRSSHAA) form a disordered region. One can recognise a CheB-type methylesterase domain in the interval 179–372 (SGKQYKLLLI…ESILKESARG (194 aa)). Residues S191, H218, and D314 contribute to the active site.

It belongs to the CheB family. Post-translationally, phosphorylated by CheA. Phosphorylation of the N-terminal regulatory domain activates the methylesterase activity.

It is found in the cytoplasm. It catalyses the reaction [protein]-L-glutamate 5-O-methyl ester + H2O = L-glutamyl-[protein] + methanol + H(+). The enzyme catalyses L-glutaminyl-[protein] + H2O = L-glutamyl-[protein] + NH4(+). Involved in chemotaxis. Part of a chemotaxis signal transduction system that modulates chemotaxis in response to various stimuli. Catalyzes the demethylation of specific methylglutamate residues introduced into the chemoreceptors (methyl-accepting chemotaxis proteins or MCP) by CheR. Also mediates the irreversible deamidation of specific glutamine residues to glutamic acid. In Shewanella sp. (strain MR-4), this protein is Protein-glutamate methylesterase/protein-glutamine glutaminase 1.